The chain runs to 427 residues: UPF0597 protein CPF_0803 (427 aa).

The protein belongs to the UPF0597 family.

This Clostridium perfringens (strain ATCC 13124 / DSM 756 / JCM 1290 / NCIMB 6125 / NCTC 8237 / Type A) protein is UPF0597 protein CPF_0803.